The chain runs to 79 residues: Large ribosomal subunit protein uL24 (79 aa).

Belongs to the universal ribosomal protein uL24 family. In terms of assembly, part of the 50S ribosomal subunit.

Its function is as follows. One of two assembly initiator proteins, it binds directly to the 5'-end of the 23S rRNA, where it nucleates assembly of the 50S subunit. Functionally, one of the proteins that surrounds the polypeptide exit tunnel on the outside of the subunit. This Lactobacillus delbrueckii subsp. bulgaricus (strain ATCC BAA-365 / Lb-18) protein is Large ribosomal subunit protein uL24.